Reading from the N-terminus, the 334-residue chain is Cytoskeleton protein RodZ (334 aa).

The Cytoplasmic segment spans residues 1-111 (MNTEATHDQN…LGKRRKKRDG (111 aa)). In terms of domain architecture, HTH cro/C1-type spans 19–71 (LRNAREQLGLSQQAVAERLCLKVSTVRDIEEDKAPSDLASTFLRGYIRSYARL). Positions 30-49 (QQAVAERLCLKVSTVRDIEE) form a DNA-binding region, H-T-H motif. A helical; Signal-anchor for type II membrane protein membrane pass occupies residues 112–132 (WLMSFTWLVLFVVVGLTGAWW). The Periplasmic portion of the chain corresponds to 133–334 (WQNHKAQQEE…TLNAEPTPAQ (202 aa)). Positions 154 to 241 (LNADKDSGQS…PSALPTSQAG (88 aa)) are disordered. 2 stretches are compositionally biased toward low complexity: residues 176-211 (TTPA…TVVA) and 219-241 (TAAT…SQAG).

It belongs to the RodZ family.

The protein localises to the cell inner membrane. Functionally, cytoskeletal protein that is involved in cell-shape control through regulation of the length of the long axis. This Salmonella choleraesuis (strain SC-B67) protein is Cytoskeleton protein RodZ.